We begin with the raw amino-acid sequence, 158 residues long: NAD(P)H-quinone oxidoreductase subunit J, chloroplastic (158 aa).

The protein belongs to the complex I 30 kDa subunit family. NDH is composed of at least 16 different subunits, 5 of which are encoded in the nucleus.

It localises to the plastid. The protein localises to the chloroplast thylakoid membrane. The enzyme catalyses a plastoquinone + NADH + (n+1) H(+)(in) = a plastoquinol + NAD(+) + n H(+)(out). It catalyses the reaction a plastoquinone + NADPH + (n+1) H(+)(in) = a plastoquinol + NADP(+) + n H(+)(out). Its function is as follows. NDH shuttles electrons from NAD(P)H:plastoquinone, via FMN and iron-sulfur (Fe-S) centers, to quinones in the photosynthetic chain and possibly in a chloroplast respiratory chain. The immediate electron acceptor for the enzyme in this species is believed to be plastoquinone. Couples the redox reaction to proton translocation, and thus conserves the redox energy in a proton gradient. The protein is NAD(P)H-quinone oxidoreductase subunit J, chloroplastic of Lactuca sativa (Garden lettuce).